Reading from the N-terminus, the 186-residue chain is Interferon beta (186 aa).

An N-terminal signal peptide occupies residues 1-21 (MTGRCILQIALLVCFFTTAHS). Tyr-24 is subject to Phosphotyrosine. 4 N-linked (GlcNAc...) asparagine glycosylation sites follow: Asn-46, Asn-101, Asn-131, and Asn-136. A disulfide bridge connects residues Cys-52 and Cys-161.

This sequence belongs to the alpha/beta interferon family. As to quaternary structure, monomer.

It localises to the secreted. Type I interferon cytokine that plays a key role in the innate immune response to infection, developing tumors and other inflammatory stimuli. Signals via binding to high-affinity (IFNAR2) and low-affinity (IFNAR1) heterodimeric receptor, activating the canonical Jak-STAT signaling pathway resulting in transcriptional activation or repression of interferon-regulated genes that encode the effectors of the interferon response, such as antiviral proteins, regulators of cell proliferation and differentiation, and immunoregulatory proteins. Signals mostly via binding to a IFNAR1-IFNAR2 heterodimeric receptor, but can also function with IFNAR1 alone and independently of Jak-STAT pathways. Elicits a wide variety of responses, including antiviral and antibacterial activities, and can regulate the development of B-cells, myelopoiesis and lipopolysaccharide (LPS)-inducible production of tumor necrosis factor. Plays a role in neuronal homeostasis by regulating dopamine turnover and protecting dopaminergic neurons: acts by promoting neuronal autophagy and alpha-synuclein clearance, thereby preventing dopaminergic neuron loss. IFNB1 is more potent than interferon-alpha (IFN-alpha) in inducing the apoptotic and antiproliferative pathways required for control of tumor cell growth. The chain is Interferon beta (IFNB1) from Felis catus (Cat).